Here is a 386-residue protein sequence, read N- to C-terminus: UDP-N-acetylbacillosamine transaminase (386 aa).

Substrate-binding positions include N25–A28, A56, and S179. Position 184 is an N6-(pyridoxal phosphate)lysine (K184). Substrate is bound by residues N227 and Q325–T328.

It belongs to the DegT/DnrJ/EryC1 family. The cofactor is pyridoxal 5'-phosphate.

It carries out the reaction UDP-N-acetylbacillosamine + 2-oxoglutarate = UDP-2-acetamido-2,6-dideoxy-alpha-D-xylo-hex-4-ulose + L-glutamate. Its pathway is protein modification; protein glycosylation. Aminotransferase involved in the bacillosamine biosynthesis pathway by producing UDP-4-amino-4,6-dideoxy-alpha-D-GlcNAc (UDP-2-acetamido-4-amino-2,4,6-trideoxy-alpha-D-glucopyranose), a precursor used in the production of the glycan component 2,4-diacetamido-2,4,6-trideoxy-alpha-D-glucopyranose. Required for host colonization and virulence. Involved in the N-linked protein glycosylation pathway. The chain is UDP-N-acetylbacillosamine transaminase (pglE) from Campylobacter jejuni subsp. jejuni serotype O:2 (strain ATCC 700819 / NCTC 11168).